Consider the following 441-residue polypeptide: Insulinoma-associated protein 1 (441 aa).

The segment covering 1 to 12 (MPKGFLVKRSRK) has biased composition (basic residues). Positions 1 to 20 (MPKGFLVKRSRKSPPVSYRV) are SNAG domain. 4 disordered regions span residues 1-31 (MPKG…GESL), 43-189 (TGGA…KAIR), 205-224 (LKIK…SSGP), and 278-316 (RWHK…EDGL). The span at 19 to 28 (RVREEEEPRG) shows a compositional bias: basic and acidic residues. The segment covering 74 to 83 (NPDTVQQALY) has biased composition (polar residues). A compositionally biased stretch (basic and acidic residues) spans 89-98 (VSREQRERKY). 2 stretches are compositionally biased toward low complexity: residues 138–147 (VSSSSSVSRS) and 169–180 (GATSSSAPSKPP). The C2H2-type 1 zinc finger occupies 258–280 (YRCPECHKVFSCPANLASHRRWH). Residues 292–302 (AKEEPLSDRDT) show a composition bias toward basic and acidic residues. C2H2-type zinc fingers lie at residues 317–339 (YECP…LLSH), 372–395 (HPCP…RLLH), and 400–423 (YPCK…NKCH).

It belongs to the INSM1 family.

The protein localises to the nucleus. In terms of biological role, may act as a transcriptional regulator. Plays a role in noradrenergic neuron, pancreatic and gastrointestinal endocrine cells differentiation during embryonic development. This chain is Insulinoma-associated protein 1 (insm1), found in Xenopus tropicalis (Western clawed frog).